The following is a 295-amino-acid chain: Aspartate carbamoyltransferase catalytic subunit (295 aa).

2 residues coordinate carbamoyl phosphate: Arg49 and Thr50. Lys77 is an L-aspartate binding site. The carbamoyl phosphate site is built by Arg99, His127, and Gln130. 2 residues coordinate L-aspartate: Arg161 and Arg212. Residues Gly251 and Pro252 each coordinate carbamoyl phosphate.

This sequence belongs to the aspartate/ornithine carbamoyltransferase superfamily. ATCase family. As to quaternary structure, heterododecamer (2C3:3R2) of six catalytic PyrB chains organized as two trimers (C3), and six regulatory PyrI chains organized as three dimers (R2).

The catalysed reaction is carbamoyl phosphate + L-aspartate = N-carbamoyl-L-aspartate + phosphate + H(+). It participates in pyrimidine metabolism; UMP biosynthesis via de novo pathway; (S)-dihydroorotate from bicarbonate: step 2/3. In terms of biological role, catalyzes the condensation of carbamoyl phosphate and aspartate to form carbamoyl aspartate and inorganic phosphate, the committed step in the de novo pyrimidine nucleotide biosynthesis pathway. This chain is Aspartate carbamoyltransferase catalytic subunit, found in Campylobacter jejuni subsp. jejuni serotype O:6 (strain 81116 / NCTC 11828).